A 118-amino-acid polypeptide reads, in one-letter code: Small ribosomal subunit protein uS13 (118 aa).

The tract at residues 93–118 (RGLPVRGQRTKTNARTRKGPRKPIRK) is disordered.

Belongs to the universal ribosomal protein uS13 family. In terms of assembly, part of the 30S ribosomal subunit. Forms a loose heterodimer with protein S19. Forms two bridges to the 50S subunit in the 70S ribosome.

In terms of biological role, located at the top of the head of the 30S subunit, it contacts several helices of the 16S rRNA. In the 70S ribosome it contacts the 23S rRNA (bridge B1a) and protein L5 of the 50S subunit (bridge B1b), connecting the 2 subunits; these bridges are implicated in subunit movement. Contacts the tRNAs in the A and P-sites. This Pseudomonas paraeruginosa (strain DSM 24068 / PA7) (Pseudomonas aeruginosa (strain PA7)) protein is Small ribosomal subunit protein uS13.